The primary structure comprises 228 residues: L-ribulose-5-phosphate 4-epimerase UlaF (228 aa).

Substrate-binding positions include 26-27, 43-44, and 72-73; these read GN, SG, and SS. 3 residues coordinate Zn(2+): D74, H93, and H95. D118 serves as the catalytic Proton donor/acceptor. Position 167 (H167) interacts with Zn(2+). Catalysis depends on Y225, which acts as the Proton donor/acceptor.

Belongs to the aldolase class II family. AraD/FucA subfamily. Zn(2+) serves as cofactor.

It carries out the reaction L-ribulose 5-phosphate = D-xylulose 5-phosphate. The protein operates within cofactor degradation; L-ascorbate degradation; D-xylulose 5-phosphate from L-ascorbate: step 4/4. Its function is as follows. Catalyzes the isomerization of L-ribulose 5-phosphate to D-xylulose 5-phosphate. Is involved in the anaerobic L-ascorbate utilization. This chain is L-ribulose-5-phosphate 4-epimerase UlaF, found in Escherichia coli O81 (strain ED1a).